Consider the following 322-residue polypeptide: Putative pyruvyl transferase EpsO (322 aa).

It belongs to the polysaccharide pyruvyl transferase family.

In terms of biological role, may be involved in the production of the exopolysaccharide (EPS) component of the extracellular matrix during biofilm formation. EPS is responsible for the adhesion of chains of cells into bundles. The chain is Putative pyruvyl transferase EpsO (epsO) from Bacillus subtilis (strain 168).